The sequence spans 207 residues: Dephospho-CoA kinase (207 aa).

The DPCK domain occupies 5 to 203 (AVGLTGGIAC…ARYRALASVF (199 aa)). An ATP-binding site is contributed by 13 to 18 (ACGKSL).

It belongs to the CoaE family.

The protein resides in the cytoplasm. It catalyses the reaction 3'-dephospho-CoA + ATP = ADP + CoA + H(+). It participates in cofactor biosynthesis; coenzyme A biosynthesis; CoA from (R)-pantothenate: step 5/5. Its function is as follows. Catalyzes the phosphorylation of the 3'-hydroxyl group of dephosphocoenzyme A to form coenzyme A. This is Dephospho-CoA kinase from Xylella fastidiosa (strain 9a5c).